We begin with the raw amino-acid sequence, 386 residues long: AT-hook motif nuclear-localized protein 8 (386 aa).

Disordered stretches follow at residues 1-175 (MDSR…LGGT) and 303-372 (KQSS…LHPH). Low complexity predominate over residues 54–70 (QQQSQTFHQQQQQQMDQ). A compositionally biased stretch (basic residues) spans 101-110 (VKKKRGRPRK). A Bipartite nuclear localization signal motif is present at residues 102–110 (KKKRGRPRK). The segment at residues 102 to 114 (KKKRGRPRKYTPD) is a DNA-binding region (a.T hook 1). Polar residues predominate over residues 126-135 (PLLSAASNSY). Over residues 136–147 (GEGGVGDSGGNG) the composition is skewed to gly residues. Positions 155-167 (KRNRGRPPGSSKK) form a DNA-binding region, a.T hook 2. Residues 174-316 (GTSGVGFTPH…VNIARGQNPE (143 aa)) form the PPC domain. Composition is skewed to low complexity over residues 328–337 (GSVSQGPSSE) and 361–372 (QQQQQQQPLHPH).

The protein resides in the nucleus. Transcription factor that specifically binds AT-rich DNA sequences related to the nuclear matrix attachment regions (MARs). The chain is AT-hook motif nuclear-localized protein 8 from Arabidopsis thaliana (Mouse-ear cress).